Here is a 359-residue protein sequence, read N- to C-terminus: Probable 2-oxoacid dependent dioxygenase (359 aa).

The Fe2OG dioxygenase domain occupies 207-308 (KGLWMLCHCF…ISVACFFVHT (102 aa)). Fe cation contacts are provided by His231, Asp233, and His287. Residues 329–359 (PPKYRDTTSESSNHYVARKPNGNSSLDHLRI) are disordered. Residues 349–359 (NGNSSLDHLRI) are compositionally biased toward polar residues.

The protein belongs to the iron/ascorbate-dependent oxidoreductase family. Requires Fe(2+) as cofactor. As to expression, expressed in leaves and seeds. All cultivars with seed-only-functional allele have low to non-detectable GSL-OH expression in the leaves.

It carries out the reaction gluconapin + AH2 + O2 = progoitrin + A + H2O. In terms of biological role, necessary for the hydroxylation of but-3-enyl glucosinolate to 2-hydroxybut-3-enyl glucosinolate, which is toxic to insects, bacteria and nematodes, inhibits seed germination and produces bitter flavors. The sequence is that of Probable 2-oxoacid dependent dioxygenase from Arabidopsis thaliana (Mouse-ear cress).